The primary structure comprises 512 residues: Sodium/proline symporter (512 aa).

13 helical membrane-spanning segments follow: residues 16-36 (WQTY…GFYG), 54-74 (IGPY…WMIM), 85-105 (LSAM…YFVV), 139-159 (IISG…GFVS), 174-194 (FGLI…GYLA), 200-220 (FFQG…AMMN), 240-260 (LFKG…LGYF), 286-306 (ISWM…GIAF), 327-347 (VLFH…AIMS), 381-401 (FVMI…AIAW), 410-430 (LVGN…LFAL), 438-458 (AGAV…IAWI), and 467-487 (IFGL…TYVV).

This sequence belongs to the sodium:solute symporter (SSF) (TC 2.A.21) family.

The protein localises to the cell membrane. It catalyses the reaction L-proline(in) + Na(+)(in) = L-proline(out) + Na(+)(out). Its function is as follows. Catalyzes the sodium-dependent uptake of extracellular L-proline. Since most S.aureus strains are L-proline auxotrophs, this transporter may aid the bacterial persistence during an infection of tissues with low proline concentrations. The chain is Sodium/proline symporter (putP) from Staphylococcus aureus (strain Newman).